The chain runs to 179 residues: UPF0227 protein Sbal195_2522 (179 aa).

Belongs to the UPF0227 family.

The sequence is that of UPF0227 protein Sbal195_2522 from Shewanella baltica (strain OS195).